A 117-amino-acid chain; its full sequence is Ig heavy chain V region 5-76 (117 aa).

The N-terminal stretch at 1-19 (MNFVLSLIFLALILKGVQC) is a signal peptide. Positions 20-49 (EVHLVESGGGLVKPGGSLKLSCVVSGFTFN) are framework-1. An intrachain disulfide couples Cys41 to Cys115. A complementarity-determining-1 region spans residues 50-54 (KYAMS). The tract at residues 55–68 (WVRQTPEKRLEWVA) is framework-2. Residues 69–85 (TISSGGLYTYYPDSVKG) form a complementarity-determining-2 region. The framework-3 stretch occupies residues 86-117 (RFTISRDNAGNTLYLQMSSLRSEDTAMYYCAR).

The sequence is that of Ig heavy chain V region 5-76 from Mus musculus (Mouse).